Here is a 412-residue protein sequence, read N- to C-terminus: Protein trichome birefringence-like 13 (412 aa).

Residues 9–29 (PSLFPLLSLLCFISIFLLLSL) traverse the membrane as a helical; Signal-anchor for type II membrane protein segment. The GDS motif signature appears at 137-139 (GDS). The DCXHWCLPGXXDXWN motif motif lies at 385-399 (DCMHWCLPGLTDTWN).

Belongs to the PC-esterase family. TBL subfamily.

It is found in the membrane. Its function is as follows. May act as a bridging protein that binds pectin and other cell wall polysaccharides. Probably involved in maintaining esterification of pectins. May be involved in the specific O-acetylation of cell wall polymers. The sequence is that of Protein trichome birefringence-like 13 (TBL13) from Arabidopsis thaliana (Mouse-ear cress).